The sequence spans 487 residues: N-succinylglutamate 5-semialdehyde dehydrogenase (487 aa).

G221–G226 contributes to the NAD(+) binding site. Residues E244 and C278 contribute to the active site.

Belongs to the aldehyde dehydrogenase family. AstD subfamily.

The catalysed reaction is N-succinyl-L-glutamate 5-semialdehyde + NAD(+) + H2O = N-succinyl-L-glutamate + NADH + 2 H(+). The protein operates within amino-acid degradation; L-arginine degradation via AST pathway; L-glutamate and succinate from L-arginine: step 4/5. Its function is as follows. Catalyzes the NAD-dependent reduction of succinylglutamate semialdehyde into succinylglutamate. The protein is N-succinylglutamate 5-semialdehyde dehydrogenase of Burkholderia cenocepacia (strain HI2424).